Reading from the N-terminus, the 269-residue chain is Diadenylate cyclase (269 aa).

The DAC domain maps to 109–266 (RSGIYDLFAN…GGKMILEIDP (158 aa)).

Belongs to the adenylate cyclase family. DacZ subfamily. Requires Mn(2+) as cofactor.

It carries out the reaction 2 ATP = 3',3'-c-di-AMP + 2 diphosphate. Diadenylate cyclase that catalyzes the condensation of 2 ATP molecules into cyclic di-AMP (c-di-AMP). c-di-AMP is a second messenger for intracellular signal transduction involved in the control of important regulatory processes such as osmoregulation. Is essential for H.volcanii. Overexpression of DacZ leads to cell death, suggesting the need for tight regulation of c-di-AMP levels. Cannot use GTP as substrate. This Haloferax volcanii (strain ATCC 29605 / DSM 3757 / JCM 8879 / NBRC 14742 / NCIMB 2012 / VKM B-1768 / DS2) (Halobacterium volcanii) protein is Diadenylate cyclase.